Reading from the N-terminus, the 467-residue chain is Acetaldehyde dehydrogenase (acetylating) EutE (467 aa).

Belongs to the EutE/PduP family. In terms of assembly, interacts with EutS, which targets it to the interior of the BMC. It depends on Has a very strong preference for NAD(+) over NADP(+). as a cofactor.

Its subcellular location is the bacterial microcompartment. It carries out the reaction acetaldehyde + NAD(+) + CoA = acetyl-CoA + NADH + H(+). It functions in the pathway amine and polyamine degradation; ethanolamine degradation. Functionally, acts as the second step in ethanolamine degradation by converting acetaldehyde into acetyl-CoA. May play a role in bacterial microcompartment (BMC) assembly or maintenance. Directly targeted to the BMC. Its heterologous expression in S.cerevisiae increases the level of acetylating acetaldehyde dehydrogenase activity. This is Acetaldehyde dehydrogenase (acetylating) EutE (eutE) from Escherichia coli (strain K12).